Consider the following 744-residue polypeptide: Cullin-1 (744 aa).

In terms of domain architecture, Cullin neddylation spans 674–736 (DRRYAIDASI…RDYLERDKDN (63 aa)).

Belongs to the cullin family. Part of a SCF (SKP1-CUL1-F-box protein) E3 ubiquitin-protein ligase complex. Is able to form the SCF complex together with SKP1 and the rice black streaked dwarf virus RBSDV protein P7-2. Interacts with D3. Post-translationally, neddylated (rubylated). Deneddylation occurs upon interaction with the COP9 signalosome (CSN) complex. In terms of tissue distribution, expressed in dry seeds and coleoptiles.

In terms of biological role, involved in ubiquitination and subsequent proteasomal degradation of target proteins. This Oryza sativa subsp. japonica (Rice) protein is Cullin-1.